A 267-amino-acid polypeptide reads, in one-letter code: Pyridoxine/pyridoxamine 5'-phosphate oxidase (267 aa).

Substrate contacts are provided by residues 20-23 (RQGY) and lysine 80. FMN is bound by residues 75-80 (RTVLLK), 90-91 (YT), arginine 96, lysine 97, and glutamine 119. Substrate is bound by residues tyrosine 137, arginine 141, and serine 145. Residues 154–155 (QS) and tryptophan 200 each bind FMN. 206–208 (RLH) serves as a coordination point for substrate. Arginine 210 contributes to the FMN binding site.

The protein belongs to the pyridoxamine 5'-phosphate oxidase family. Homodimer. Requires FMN as cofactor.

It catalyses the reaction pyridoxamine 5'-phosphate + O2 + H2O = pyridoxal 5'-phosphate + H2O2 + NH4(+). The catalysed reaction is pyridoxine 5'-phosphate + O2 = pyridoxal 5'-phosphate + H2O2. It functions in the pathway cofactor metabolism; pyridoxal 5'-phosphate salvage; pyridoxal 5'-phosphate from pyridoxamine 5'-phosphate: step 1/1. It participates in cofactor metabolism; pyridoxal 5'-phosphate salvage; pyridoxal 5'-phosphate from pyridoxine 5'-phosphate: step 1/1. In terms of biological role, catalyzes the oxidation of either pyridoxine 5'-phosphate (PNP) or pyridoxamine 5'-phosphate (PMP) into pyridoxal 5'-phosphate (PLP). The chain is Pyridoxine/pyridoxamine 5'-phosphate oxidase from Frankia casuarinae (strain DSM 45818 / CECT 9043 / HFP020203 / CcI3).